We begin with the raw amino-acid sequence, 388 residues long: AdoMet-dependent heme synthase (388 aa).

The span at 1-12 (MHNANHPHGNGH) shows a compositional bias: low complexity. The interval 1-29 (MHNANHPHGNGHPAEKKGMGAHSGAMNMP) is disordered. The Radical SAM core domain occupies 34–257 (DGSPACRLIA…TSMHLKATCA (224 aa)). [4Fe-4S] cluster is bound by residues cysteine 50, cysteine 54, and cysteine 57.

This sequence belongs to the radical SAM superfamily. It depends on [4Fe-4S] cluster as a cofactor.

The catalysed reaction is Fe-coproporphyrin III + 2 S-adenosyl-L-methionine = heme b + 2 5'-deoxyadenosine + 2 L-methionine + 2 CO2. Its pathway is porphyrin-containing compound metabolism; protoheme biosynthesis. In terms of biological role, involved in siroheme-dependent heme b biosynthesis. Catalyzes the conversion of Fe-coproporphyrin III into heme by the oxidative decarboxylation of two propionate side chains. The sequence is that of AdoMet-dependent heme synthase from Oleidesulfovibrio alaskensis (strain ATCC BAA-1058 / DSM 17464 / G20) (Desulfovibrio alaskensis).